Here is a 254-residue protein sequence, read N- to C-terminus: Translation initiation factor 2 subunit alpha (254 aa).

One can recognise an S1 motif domain in the interval 10-81 (GDLVVVKITE…ERKVVDLSLK (72 aa)).

This sequence belongs to the eIF-2-alpha family. Heterotrimer composed of an alpha, a beta and a gamma chain.

Its function is as follows. eIF-2 functions in the early steps of protein synthesis by forming a ternary complex with GTP and initiator tRNA. This chain is Translation initiation factor 2 subunit alpha, found in Thermoplasma acidophilum (strain ATCC 25905 / DSM 1728 / JCM 9062 / NBRC 15155 / AMRC-C165).